The following is a 461-amino-acid chain: RNA-binding protein ZCH321 (461 aa).

2 C3H1-type zinc fingers span residues 63–85 (LCQLFLNGRCRQGTQCHQVHAAL) and 181–208 (ACDFKICGLHTLDRCRYAEECIFLHICK). A disordered region spans residues 224–243 (TSQARDGGEPGPRGAKKGSV). Residues 446–451 (WQHNPY) carry the MKT1-binding motif motif.

RNA-binding protein involved in regulation of mRNA stability. Promotes mRNA stabilization by recruiting MKT1 and PBP1. Stabilizes transcripts encoding mitochondrial proteins. The chain is RNA-binding protein ZCH321 from Trypanosoma brucei brucei (strain 927/4 GUTat10.1).